The chain runs to 775 residues: Venom dipeptidyl peptidase 4 (775 aa).

Residues 1–23 form the signal peptide; that stretch reads MEVLVQLALLLVVHGSLVVLVAG. 2 N-linked (GlcNAc...) asparagine glycosylation sites follow: N68 and N239. Cystine bridges form between C450-C453 and C463-C481. N-linked (GlcNAc...) asparagine glycans are attached at residues N473, N505, N578, and N631. S639 serves as the catalytic Charge relay system. A disulfide bridge links C659 with C770. N689 and N694 each carry an N-linked (GlcNAc...) asparagine glycan. Catalysis depends on charge relay system residues D718 and H750.

This sequence belongs to the peptidase S9B family. DPPIV subfamily. As to expression, expressed by the venom duct.

The protein resides in the secreted. It carries out the reaction Release of an N-terminal dipeptide, Xaa-Yaa-|-Zaa-, from a polypeptide, preferentially when Yaa is Pro, provided Zaa is neither Pro nor hydroxyproline.. With respect to regulation, inhibited by diprotin A. Functionally, venom dipeptidyl-peptidase which removes N-terminal dipeptides sequentially from polypeptides having unsubstituted N-termini provided that the penultimate residue is proline. May process promelittin into its active form and/or modulate the chemotactic activity of immune cells after the insect sting. This Apis mellifera (Honeybee) protein is Venom dipeptidyl peptidase 4.